A 127-amino-acid polypeptide reads, in one-letter code: NADPH-dependent 7-cyano-7-deazaguanine reductase (127 aa).

Cys-40 serves as the catalytic Thioimide intermediate. The active-site Proton donor is Asp-47. Residues Val-62–Leu-64 and His-81–Glu-82 contribute to the substrate site.

Belongs to the GTP cyclohydrolase I family. QueF type 1 subfamily.

The protein resides in the cytoplasm. It carries out the reaction 7-aminomethyl-7-carbaguanine + 2 NADP(+) = 7-cyano-7-deazaguanine + 2 NADPH + 3 H(+). Its pathway is tRNA modification; tRNA-queuosine biosynthesis. Functionally, catalyzes the NADPH-dependent reduction of 7-cyano-7-deazaguanine (preQ0) to 7-aminomethyl-7-deazaguanine (preQ1). This chain is NADPH-dependent 7-cyano-7-deazaguanine reductase, found in Campylobacter jejuni subsp. jejuni serotype O:2 (strain ATCC 700819 / NCTC 11168).